We begin with the raw amino-acid sequence, 309 residues long: NAD kinase 2 (309 aa).

The active-site Proton acceptor is Asp-81. Residues 81 to 82, 155 to 156, Asp-185, 196 to 201, and Asn-255 each bind NAD(+); these read DG, NE, and TAYALS.

It belongs to the NAD kinase family. It depends on a divalent metal cation as a cofactor.

Its subcellular location is the cytoplasm. It catalyses the reaction NAD(+) + ATP = ADP + NADP(+) + H(+). Involved in the regulation of the intracellular balance of NAD and NADP, and is a key enzyme in the biosynthesis of NADP. Catalyzes specifically the phosphorylation on 2'-hydroxyl of the adenosine moiety of NAD to yield NADP. The protein is NAD kinase 2 of Gloeobacter violaceus (strain ATCC 29082 / PCC 7421).